The chain runs to 77 residues: Large ribosomal subunit protein bL28 (77 aa).

This sequence belongs to the bacterial ribosomal protein bL28 family.

This is Large ribosomal subunit protein bL28 from Polaromonas sp. (strain JS666 / ATCC BAA-500).